Consider the following 249-residue polypeptide: Probable phosphatase Shal_1519 (249 aa).

Zn(2+) contacts are provided by His8, His10, His16, His41, Glu74, His102, His132, Asp193, and His195.

This sequence belongs to the PHP family. Requires Zn(2+) as cofactor.

This chain is Probable phosphatase Shal_1519, found in Shewanella halifaxensis (strain HAW-EB4).